We begin with the raw amino-acid sequence, 98 residues long: NADH-ubiquinone oxidoreductase chain 4L (98 aa).

Helical transmembrane passes span 1–21, 29–49, and 61–81; these read MPSI…GMLV, SLLC…LTAL, and IILL…LVMV.

The protein belongs to the complex I subunit 4L family. Core subunit of respiratory chain NADH dehydrogenase (Complex I) which is composed of 45 different subunits.

The protein resides in the mitochondrion inner membrane. The enzyme catalyses a ubiquinone + NADH + 5 H(+)(in) = a ubiquinol + NAD(+) + 4 H(+)(out). In terms of biological role, core subunit of the mitochondrial membrane respiratory chain NADH dehydrogenase (Complex I) which catalyzes electron transfer from NADH through the respiratory chain, using ubiquinone as an electron acceptor. Part of the enzyme membrane arm which is embedded in the lipid bilayer and involved in proton translocation. This chain is NADH-ubiquinone oxidoreductase chain 4L (MT-ND4L), found in Oryctolagus cuniculus (Rabbit).